The chain runs to 423 residues: Protein TylM3 (423 aa).

Low complexity predominate over residues 1–21 (MNTAAGPTGTAAGGTTAPAAA). 2 disordered regions span residues 1 to 26 (MNTAAGPTGTAAGGTTAPAAAHDLSR) and 117 to 149 (GSALDAAHGNPGGPPLPGGWPHRPPDREERDDP). The span at 139–149 (RPPDREERDDP) shows a compositional bias: basic and acidic residues.

Belongs to the cytochrome P450 family.

It functions in the pathway antibiotic biosynthesis; tylosin biosynthesis. Involved in the biosynthesis of the macrolide antibiotic tylosin derived from the polyketide lactone tylactone. TylM3 is required for the glycosylation of the 5-hydroxyl group of tylactone to yield 5-O-mycaminosytylactone. The protein is Protein TylM3 of Streptomyces fradiae (Streptomyces roseoflavus).